The primary structure comprises 89 residues: Large ribosomal subunit protein bL27 (89 aa).

The tract at residues 1–26 is disordered; it reads MATKKAGGSSKNGRDSAGRRLGLKKS.

This sequence belongs to the bacterial ribosomal protein bL27 family.

The chain is Large ribosomal subunit protein bL27 from Orientia tsutsugamushi (strain Ikeda) (Rickettsia tsutsugamushi).